Reading from the N-terminus, the 528-residue chain is (R)-citramalate synthase (528 aa).

The Pyruvate carboxyltransferase domain maps to valine 4–arginine 266.

The protein belongs to the alpha-IPM synthase/homocitrate synthase family.

The enzyme catalyses pyruvate + acetyl-CoA + H2O = (3R)-citramalate + CoA + H(+). It participates in amino-acid biosynthesis; L-isoleucine biosynthesis; 2-oxobutanoate from pyruvate: step 1/3. Its function is as follows. Catalyzes the condensation of pyruvate and acetyl-coenzyme A to form (R)-citramalate. Makes part of the main pathway for isoleucine biosynthesis in G.sulfurreducens, i.e. the citramalate-dependent pathway. The protein is (R)-citramalate synthase of Geobacter sulfurreducens (strain ATCC 51573 / DSM 12127 / PCA).